Reading from the N-terminus, the 294-residue chain is MSVSEQDPNRAYRETQSQIYKLQETLLNSARTKNKQEEGQESNTHSFPEQYMHYQNGRNSAYDLPNVSSQSVLAFTEKHYPNKLKNLGTLYYNRFKEGSFDEDSTSYSDRHSFPYNLYDNTLPPPFLPAIGIQNINNIATLKITYEDIQASFNNIESPRKRNNEIWGCDIYSDDSDPILVLRHCGFKIGAPSGGSFHKLRRTPVNVTNQDNVTGNLPLLEGTPFDLEVELLFLPTLQKYPSVKRFDITSREWGSEATVIHDGLSYGIYSIVIKQRLDRDKPHEPNGYIKNLKWT.

Ser2 carries the post-translational modification N-acetylserine.

Belongs to the RXT3 family. Component of the RPD3C(L) complex composed of at least ASH1, CTI6, DEP1, PHO23, RPD3, RXT2, RXT3, SAP30, SDS3, SIN3, UME1 and UME6.

The protein localises to the nucleus. In terms of biological role, component of the RPD3C(L) histone deacetylase complex (HDAC) responsible for the deacetylation of lysine residues on the N-terminal part of the core histones (H2A, H2B, H3 and H4). Histone deacetylation gives a tag for epigenetic repression and plays an important role in transcriptional regulation, cell cycle progression and developmental events. The polypeptide is Transcriptional regulatory protein RXT3 (RXT3) (Saccharomyces cerevisiae (strain ATCC 204508 / S288c) (Baker's yeast)).